An 84-amino-acid polypeptide reads, in one-letter code: uncharacterized protein (84 aa).

The 83-residue stretch at 1-83 (MDDKFTTLPC…CKQAVFVYKI (83 aa)) folds into the LITAF domain. C21 and C24 together coordinate Zn(2+). The tract at residues 39 to 61 (MSWVVCTAITLACLPCCCIPFLC) is membrane-binding amphipathic helix. Residues C71 and C74 each coordinate Zn(2+).

The protein localises to the host membrane. This is an uncharacterized protein from Dryophytes versicolor (chameleon treefrog).